The sequence spans 759 residues: DNA topoisomerase 4 subunit A (759 aa).

A Topo IIA-type catalytic domain is found at 44–516 (LPDVRDGLKP…VFGEAPQVDA (473 aa)). The active-site O-(5'-phospho-DNA)-tyrosine intermediate is Tyr132.

It belongs to the type II topoisomerase GyrA/ParC subunit family. ParC type 1 subfamily. In terms of assembly, heterotetramer composed of ParC and ParE.

The protein localises to the cell membrane. The enzyme catalyses ATP-dependent breakage, passage and rejoining of double-stranded DNA.. Its function is as follows. Topoisomerase IV is essential for chromosome segregation. It relaxes supercoiled DNA. Performs the decatenation events required during the replication of a circular DNA molecule. This is DNA topoisomerase 4 subunit A from Caulobacter vibrioides (strain ATCC 19089 / CIP 103742 / CB 15) (Caulobacter crescentus).